Here is a 1420-residue protein sequence, read N- to C-terminus: tRNA (32-2'-O)-methyltransferase regulator TRM732 (1420 aa).

The required for activity stretch occupies residues 748 to 754; sequence RRSGGLP.

This sequence belongs to the THADA family. Interacts with TRM7; for 2'-O-methylation of position 32 in substrate tRNAs.

The protein localises to the cytoplasm. Its function is as follows. Together with methyltransferase TRM7, methylates the 2'-O-ribose of nucleotides at position 32 of the anticodon loop of substrate tRNAs. This chain is tRNA (32-2'-O)-methyltransferase regulator TRM732 (TRM732), found in Saccharomyces cerevisiae (strain ATCC 204508 / S288c) (Baker's yeast).